The sequence spans 206 residues: Thymidylate kinase (206 aa).

10–17 is an ATP binding site; it reads GIDGAGKS.

Belongs to the thymidylate kinase family.

The enzyme catalyses dTMP + ATP = dTDP + ADP. Phosphorylation of dTMP to form dTDP in both de novo and salvage pathways of dTTP synthesis. The sequence is that of Thymidylate kinase (tmk) from Neisseria meningitidis serogroup A / serotype 4A (strain DSM 15465 / Z2491).